A 149-amino-acid polypeptide reads, in one-letter code: uncharacterized protein (149 aa).

This is an uncharacterized protein from Aquifex aeolicus (strain VF5).